A 186-amino-acid polypeptide reads, in one-letter code: Peptidyl-tRNA hydrolase (186 aa).

Residue Y14 participates in tRNA binding. H19 serves as the catalytic Proton acceptor. Positions 61, 63, and 107 each coordinate tRNA.

Belongs to the PTH family. Monomer.

Its subcellular location is the cytoplasm. The catalysed reaction is an N-acyl-L-alpha-aminoacyl-tRNA + H2O = an N-acyl-L-amino acid + a tRNA + H(+). In terms of biological role, hydrolyzes ribosome-free peptidyl-tRNAs (with 1 or more amino acids incorporated), which drop off the ribosome during protein synthesis, or as a result of ribosome stalling. Functionally, catalyzes the release of premature peptidyl moieties from peptidyl-tRNA molecules trapped in stalled 50S ribosomal subunits, and thus maintains levels of free tRNAs and 50S ribosomes. This Helicobacter pylori (strain Shi470) protein is Peptidyl-tRNA hydrolase.